A 179-amino-acid chain; its full sequence is Inner membrane-spanning protein YciB (179 aa).

5 helical membrane-spanning segments follow: residues 22-42 (IYAA…YSWV), 50-70 (MALI…FFHN), 76-96 (WKVT…QWVM), 121-141 (LAWA…AFWL), and 149-169 (FKVF…GVYI).

This sequence belongs to the YciB family.

It localises to the cell inner membrane. Plays a role in cell envelope biogenesis, maintenance of cell envelope integrity and membrane homeostasis. This chain is Inner membrane-spanning protein YciB, found in Salmonella dublin (strain CT_02021853).